The chain runs to 181 residues: Caltractin ICL1a (181 aa).

The segment at Met1–Phe29 is disordered. Low complexity predominate over residues Pro14–Lys23. 4 EF-hand domains span residues Glu37 to Glu72, Ala73 to Glu108, Asp110 to Thr145, and Met146 to Ala181. Ca(2+) is bound by residues Asp50, Asp52, Thr54, Ser56, Glu61, Asp86, Asp88, Ser90, Gln92, and Glu97.

It belongs to the centrin family. As to quaternary structure, monomer.

It is found in the cytoplasm. Its subcellular location is the cytoskeleton. Functionally, plays a fundamental role in microtubule organizing center structure and function. Component of the infraciliary lattice (ICL) and the ciliary basal bodies. This Paramecium tetraurelia protein is Caltractin ICL1a (Icl1a).